Reading from the N-terminus, the 381-residue chain is GDP-mannose-dependent monoacylated alpha-(1-6)-phosphatidylinositol monomannoside mannosyltransferase (381 aa).

Positions 206, 211, 261, and 298 each coordinate GDP-alpha-D-mannose.

Belongs to the glycosyltransferase group 1 family. Glycosyltransferase 4 subfamily.

The enzyme catalyses a 1,2-diacyl-sn-glycero-3-phospho-[alpha-D-mannopyranosyl-(1&lt;-&gt;6)-D-myo-inositol] + GDP-alpha-D-mannose = a 2,6-O-bis(alpha-D-mannopyranosyl)-1-phosphatidyl-1D-myo-inositol + GDP + H(+). It catalyses the reaction a 1,2-diacyl-sn-glycero-3-phospho-[alpha-D-6-acyl-mannopyranosyl-(1&lt;-&gt;6)-D-myo-inositol] + GDP-alpha-D-mannose = a 2-O-(alpha-D-mannosyl)-6-O-(6-O-acyl-alpha-D-mannosyl)-1-phosphatidyl-1D-myo-inositol + GDP + H(+). It functions in the pathway phospholipid metabolism; phosphatidylinositol metabolism. Involved in the biosynthesis of phosphatidyl-myo-inositol mannosides (PIM) which are early precursors in the biosynthesis of lipomannans (LM) and lipoarabinomannans (LAM). Catalyzes the addition of a mannosyl residue from GDP-D-mannose (GDP-Man) to the position 6 of a phosphatidyl-myo-inositol bearing an alpha-1,2-linked mannose residue (PIM1) to generate phosphatidyl-myo-inositol bearing alpha-1,2- and alpha-1,6-linked mannose residues (Ac1PIM2). PimB also catalyzes the addition of a mannosyl residue from GDP-Man to the position 6 of phosphatidyl-myo-inositol bearing an acylated alpha-1,2-linked mannose residue (Ac1PIM1) to generate monoacylated phosphatidyl-myo-inositol bearing alpha-1,2- and alpha-1,6-linked mannose residues (Ac1PIM2). The addition of the second mannosyl residue by PimB preferentially occurs before the acylation of the mannosyl residue transferred by PimA. Also able to transfer a mannosyl residue from GDP-Man to the position 6 of a phosphatidyl-myo-inositol (PI), but this reaction is very slow. This chain is GDP-mannose-dependent monoacylated alpha-(1-6)-phosphatidylinositol monomannoside mannosyltransferase, found in Corynebacterium glutamicum (strain ATCC 13032 / DSM 20300 / JCM 1318 / BCRC 11384 / CCUG 27702 / LMG 3730 / NBRC 12168 / NCIMB 10025 / NRRL B-2784 / 534).